The chain runs to 181 residues: MKTIEVDDELYSYIASHTKHIGESASDILRRMLKFSAASQPAAPVTKEVRVASPAIVEAKPVKTIKDKVRAMRELLLSDEYAEQKRAVNRFMLLLSTLYSLDAQAFAEATESLHGRTRVYFAADEQTLLKNGNQTKPKHVPGTPYWVITNTNTGRKCSMIEHIMQSMQFPAELIEKVCGTI.

3 interaction with DNA regions span residues 87–88 (AV), 116–120 (RTRVY), and 150–156 (NTNTGRK).

This sequence belongs to the SeqA family. Homodimer. Polymerizes to form helical filaments.

The protein localises to the cytoplasm. Functionally, negative regulator of replication initiation, which contributes to regulation of DNA replication and ensures that replication initiation occurs exactly once per chromosome per cell cycle. Binds to pairs of hemimethylated GATC sequences in the oriC region, thus preventing assembly of replication proteins and re-initiation at newly replicated origins. Repression is relieved when the region becomes fully methylated. In Shigella flexneri, this protein is Negative modulator of initiation of replication.